A 249-amino-acid polypeptide reads, in one-letter code: Type III pantothenate kinase (249 aa).

6 to 13 (DCGNSFIK) serves as a coordination point for ATP. Substrate contacts are provided by residues Tyr93 and 100–103 (GMDR). Asp102 (proton acceptor) is an active-site residue. Position 122 (Asp122) interacts with K(+). Thr125 contributes to the ATP binding site. Residue Thr181 coordinates substrate.

It belongs to the type III pantothenate kinase family. As to quaternary structure, homodimer. It depends on NH4(+) as a cofactor. The cofactor is K(+).

The protein localises to the cytoplasm. The enzyme catalyses (R)-pantothenate + ATP = (R)-4'-phosphopantothenate + ADP + H(+). It participates in cofactor biosynthesis; coenzyme A biosynthesis; CoA from (R)-pantothenate: step 1/5. Functionally, catalyzes the phosphorylation of pantothenate (Pan), the first step in CoA biosynthesis. The sequence is that of Type III pantothenate kinase from Pseudomonas putida (strain ATCC 700007 / DSM 6899 / JCM 31910 / BCRC 17059 / LMG 24140 / F1).